The sequence spans 74 residues: Small cysteine-rich protein 8 (74 aa).

Positions 1 to 21 (MAAKFHLCLLLIILGTITVQG) are cleaved as a signal peptide. Residues 22–31 (ARHPGKPHFF) constitute a propeptide that is removed on maturation.

This sequence belongs to the Cnidaria small cysteine-rich protein (SCRiP) family. beta subfamily. In terms of processing, contains 4 disulfide bonds.

It localises to the secreted. Its subcellular location is the nematocyst. In terms of biological role, induces neurotoxic symptoms on zebrafish. Has also been claimed to be implied in calcification, but tests on homolog proteins suggest that proteins of this family have a neurotoxic function and not a calcification function. This is Small cysteine-rich protein 8 from Orbicella faveolata (Mountainous star coral).